Here is a 247-residue protein sequence, read N- to C-terminus: tRNA pseudouridine synthase A (247 aa).

The Nucleophile role is filled by D52. Y113 lines the substrate pocket.

It belongs to the tRNA pseudouridine synthase TruA family. Homodimer.

The enzyme catalyses uridine(38/39/40) in tRNA = pseudouridine(38/39/40) in tRNA. Its function is as follows. Formation of pseudouridine at positions 38, 39 and 40 in the anticodon stem and loop of transfer RNAs. The chain is tRNA pseudouridine synthase A from Sinorhizobium medicae (strain WSM419) (Ensifer medicae).